We begin with the raw amino-acid sequence, 130 residues long: ESAT-6 secretion system extracellular protein C (130 aa).

This sequence belongs to the EsxC family.

Its subcellular location is the secreted. The sequence is that of ESAT-6 secretion system extracellular protein C from Staphylococcus aureus (strain MSSA476).